Here is a 157-residue protein sequence, read N- to C-terminus: MKVLEGSVAAPNAKVAVAIARFNSFINESLLEGAIDALKRIGQVKDENITIVRTPGAYELPLVARRLAESKKFDAIVALGTVIRGGTAHFEYVAGEASSGLGKVAMDAEIPVAFGVLTTENIEQAIERAGTKAGNKGAEAALTALEMVNLIQQIDAA.

Residues Phe22, 57–59 (AYE), and 81–83 (TVI) contribute to the 5-amino-6-(D-ribitylamino)uracil site. 86–87 (GT) is a binding site for (2S)-2-hydroxy-3-oxobutyl phosphate. Residue His89 is the Proton donor of the active site. Phe114 is a binding site for 5-amino-6-(D-ribitylamino)uracil. Arg128 serves as a coordination point for (2S)-2-hydroxy-3-oxobutyl phosphate.

Belongs to the DMRL synthase family. Forms an icosahedral capsid composed of 60 subunits, arranged as a dodecamer of pentamers.

The enzyme catalyses (2S)-2-hydroxy-3-oxobutyl phosphate + 5-amino-6-(D-ribitylamino)uracil = 6,7-dimethyl-8-(1-D-ribityl)lumazine + phosphate + 2 H2O + H(+). Its pathway is cofactor biosynthesis; riboflavin biosynthesis; riboflavin from 2-hydroxy-3-oxobutyl phosphate and 5-amino-6-(D-ribitylamino)uracil: step 1/2. In terms of biological role, catalyzes the formation of 6,7-dimethyl-8-ribityllumazine by condensation of 5-amino-6-(D-ribitylamino)uracil with 3,4-dihydroxy-2-butanone 4-phosphate. This is the penultimate step in the biosynthesis of riboflavin. This is 6,7-dimethyl-8-ribityllumazine synthase from Haemophilus influenzae (strain 86-028NP).